A 211-amino-acid polypeptide reads, in one-letter code: Protein-L-isoaspartate O-methyltransferase 2 (211 aa).

Residue S61 is part of the active site.

The protein belongs to the methyltransferase superfamily. L-isoaspartyl/D-aspartyl protein methyltransferase family.

The protein resides in the cytoplasm. The catalysed reaction is [protein]-L-isoaspartate + S-adenosyl-L-methionine = [protein]-L-isoaspartate alpha-methyl ester + S-adenosyl-L-homocysteine. In terms of biological role, catalyzes the methyl esterification of L-isoaspartyl residues in peptides and proteins that result from spontaneous decomposition of normal L-aspartyl and L-asparaginyl residues. It plays a role in the repair and/or degradation of damaged proteins. This Polaromonas sp. (strain JS666 / ATCC BAA-500) protein is Protein-L-isoaspartate O-methyltransferase 2.